The following is a 202-amino-acid chain: MAQADLFGDAAYPDQGVAGVDEAGRGPLAGAVYAAAVILDPQRPIDGLADSKVLKAERRERLAEQIKAQALSWCIACASTDEIDSMNILRATLLAMQRAVEGLNQLPSLALVDGNQAPRLRCAVQTIIKGDALVPAISAASILAKTARDAELQRLHALYPQYGFDQHKGYGTALHLARLREYGPCPEHRRSFAPIKAFGISA.

Positions 15 to 202 (QGVAGVDEAG…APIKAFGISA (188 aa)) constitute an RNase H type-2 domain. The a divalent metal cation site is built by Asp-21, Glu-22, and Asp-113.

The protein belongs to the RNase HII family. Mn(2+) is required as a cofactor. Mg(2+) serves as cofactor.

Its subcellular location is the cytoplasm. It carries out the reaction Endonucleolytic cleavage to 5'-phosphomonoester.. Endonuclease that specifically degrades the RNA of RNA-DNA hybrids. The sequence is that of Ribonuclease HII from Bordetella avium (strain 197N).